The following is a 351-amino-acid chain: MTSSVDSRMADALLDDFLAFTLTGSAPSATDGACAAGAVRWQWLGDGLLALEPAAAEAADTARASVLVSAGVHGDETAPIELLSMLVRDLASGALPLACRLLVVLGNVPAMRAGERYLDDDLNRLFSGRHAQVPDSREAPRATQLEAAAAAFFAAAPAGAARWHIDMHTAIRASVFEQFALLPHTGMPPTRTMFEWLGDAQIAAVLLHTAKGNTYSHFTAEHCGALACTLELGKVRPFGQNDLTRFAPADRAVRKLVSGATGEADVPLPRVFTVIDQITKQSDALELFVAADVANFTAFARGTVLAQDGDYRYTVTHDEERIVFPNPSVKPGLRAGLLVIDTTRETVAALV.

Zn(2+) contacts are provided by His-73, Glu-76, and His-168. Glu-231 is an active-site residue.

This sequence belongs to the AspA/AstE family. Succinylglutamate desuccinylase subfamily. The cofactor is Zn(2+).

The enzyme catalyses N-succinyl-L-glutamate + H2O = L-glutamate + succinate. Its pathway is amino-acid degradation; L-arginine degradation via AST pathway; L-glutamate and succinate from L-arginine: step 5/5. In terms of biological role, transforms N(2)-succinylglutamate into succinate and glutamate. In Burkholderia lata (strain ATCC 17760 / DSM 23089 / LMG 22485 / NCIMB 9086 / R18194 / 383), this protein is Succinylglutamate desuccinylase.